The chain runs to 422 residues: Glucose-1-phosphate adenylyltransferase 2 (422 aa).

Alpha-D-glucose 1-phosphate contacts are provided by residues Y110, G175, 190 to 191 (EK), and S208.

This sequence belongs to the bacterial/plant glucose-1-phosphate adenylyltransferase family. In terms of assembly, homotetramer.

The enzyme catalyses alpha-D-glucose 1-phosphate + ATP + H(+) = ADP-alpha-D-glucose + diphosphate. It participates in glycan biosynthesis; glycogen biosynthesis. Its function is as follows. Involved in the biosynthesis of ADP-glucose, a building block required for the elongation reactions to produce glycogen. Catalyzes the reaction between ATP and alpha-D-glucose 1-phosphate (G1P) to produce pyrophosphate and ADP-Glc. In Alkalilimnicola ehrlichii (strain ATCC BAA-1101 / DSM 17681 / MLHE-1), this protein is Glucose-1-phosphate adenylyltransferase 2.